A 320-amino-acid chain; its full sequence is Malate dehydrogenase (320 aa).

NAD(+) contacts are provided by residues 10–15 and D34; that span reads GAGNIG. Positions 83 and 89 each coordinate substrate. NAD(+) contacts are provided by residues N96 and 119-121; that span reads ITN. N121 and R152 together coordinate substrate. H176 functions as the Proton acceptor in the catalytic mechanism.

It belongs to the LDH/MDH superfamily. MDH type 3 family.

It catalyses the reaction (S)-malate + NAD(+) = oxaloacetate + NADH + H(+). Functionally, catalyzes the reversible oxidation of malate to oxaloacetate. The chain is Malate dehydrogenase from Novosphingobium aromaticivorans (strain ATCC 700278 / DSM 12444 / CCUG 56034 / CIP 105152 / NBRC 16084 / F199).